The sequence spans 99 residues: MIAIIETGGKQILVKEGETIFIEKIEGAEGSKVTFDKVLLLDNKIGKPYVESAKVIGEIQKQGKAKKIVVYRHNAKSTHKRKLGHRQPYTRVKITGIVG.

This sequence belongs to the bacterial ribosomal protein bL21 family. Part of the 50S ribosomal subunit. Contacts protein L20.

Its function is as follows. This protein binds to 23S rRNA in the presence of protein L20. The protein is Large ribosomal subunit protein bL21 of Mycoplasmopsis agalactiae (strain NCTC 10123 / CIP 59.7 / PG2) (Mycoplasma agalactiae).